The sequence spans 46 residues: Protein krueppel (46 aa).

3 C2H2-type zinc fingers span residues 1-4 (MRLH), 10-32 (YHCT…LRVH), and 38-46 (YACELCTSK).

The protein belongs to the krueppel C2H2-type zinc-finger protein family.

The protein localises to the nucleus. Its function is as follows. Krueppel is a gap class segmentation protein. This chain is Protein krueppel (Kr), found in Lithobius forficatus (Centipede).